A 72-amino-acid polypeptide reads, in one-letter code: DNA-directed RNA polymerase subunit omega (72 aa).

It belongs to the RNA polymerase subunit omega family. In terms of assembly, the RNAP catalytic core consists of 2 alpha, 1 beta, 1 beta' and 1 omega subunit. When a sigma factor is associated with the core the holoenzyme is formed, which can initiate transcription.

The enzyme catalyses RNA(n) + a ribonucleoside 5'-triphosphate = RNA(n+1) + diphosphate. Functionally, promotes RNA polymerase assembly. Latches the N- and C-terminal regions of the beta' subunit thereby facilitating its interaction with the beta and alpha subunits. This is DNA-directed RNA polymerase subunit omega from Lactobacillus johnsonii (strain CNCM I-12250 / La1 / NCC 533).